Here is a 254-residue protein sequence, read N- to C-terminus: ATP-dependent L-serine kinase SbnI (254 aa).

Glu-20 is a catalytic residue. An ADP-binding site is contributed by Ser-33. Ile-57 serves as a coordination point for O-phospho-L-serine. ADP contacts are provided by Asp-58, Gly-59, His-61, and Arg-62. O-phospho-L-serine contacts are provided by Gly-59 and His-61. O-phospho-L-serine-binding residues include Trp-98 and Arg-229.

Forms dimers and tetramers in solution. Predominantly forms dimers. Dimerization/oligomerization is not essential for kinase activity.

It carries out the reaction L-serine + ATP = O-phospho-L-serine + ADP + H(+). The protein operates within siderophore biosynthesis. With respect to regulation, binds heme and heme binding inhibits DNA binding. Functionally, free serine kinase that uses ATP to phosphorylate L-serine to yield O-phospho-L-serine and ADP. O-phospho-L-serine serves as a substrate for SbnA and is a precursor for staphyloferrin B biosynthesis. Is also a DNA-binding regulatory protein that senses heme to control gene expression for siderophore biosynthesis. Binds to DNA within the sbnC coding region and is required for expression of genes in the sbn operon from sbnD onward. In Staphylococcus aureus (strain NCTC 8325 / PS 47), this protein is ATP-dependent L-serine kinase SbnI.